Consider the following 148-residue polypeptide: Putative pre-16S rRNA nuclease (148 aa).

Belongs to the YqgF nuclease family.

It is found in the cytoplasm. Its function is as follows. Could be a nuclease involved in processing of the 5'-end of pre-16S rRNA. The protein is Putative pre-16S rRNA nuclease of Colwellia psychrerythraea (strain 34H / ATCC BAA-681) (Vibrio psychroerythus).